A 236-amino-acid chain; its full sequence is 2-C-methyl-D-erythritol 4-phosphate cytidylyltransferase (236 aa).

It belongs to the IspD/TarI cytidylyltransferase family. IspD subfamily.

It carries out the reaction 2-C-methyl-D-erythritol 4-phosphate + CTP + H(+) = 4-CDP-2-C-methyl-D-erythritol + diphosphate. It functions in the pathway isoprenoid biosynthesis; isopentenyl diphosphate biosynthesis via DXP pathway; isopentenyl diphosphate from 1-deoxy-D-xylulose 5-phosphate: step 2/6. Its function is as follows. Catalyzes the formation of 4-diphosphocytidyl-2-C-methyl-D-erythritol from CTP and 2-C-methyl-D-erythritol 4-phosphate (MEP). This is 2-C-methyl-D-erythritol 4-phosphate cytidylyltransferase from Burkholderia cenocepacia (strain ATCC BAA-245 / DSM 16553 / LMG 16656 / NCTC 13227 / J2315 / CF5610) (Burkholderia cepacia (strain J2315)).